We begin with the raw amino-acid sequence, 604 residues long: MDPQQQFCLKWNSFSSNLAITFSNLFKSDLLADVILSCDGVVFKAHKLILAACSKKFADLFENTPTNGQCVIILEATTPDNMAALLEFMYKGEVHVSQEALNSFLKSAESLQVKGLSTETGRLAAQQAQQHMGDLSPLDSPTGRRSVRNSLSGGSSSIVPGGVGIGLGGGATGANSMSGMGIGNGLSLAGMAAGGGMAAAANAAASSLSTLAASANIVDRCGSAGANIISGSAAGIGGSHSGGAGNGSGTVGIGGNGVGSGGGNNGPISLGSGAGAAHHLGGSTGILKQECDSLMHPGGSSSSSGMGYTHVPPIYRPINYEPPRKRAIVRSPYSEQEQRGSVLRDGSKSSECPSPINKPPYHRPSSSASSTAPTEADTMHSERASPQSSRYENHSPSTTAGNGNATSSLERIVKSERNNGSANEANDDDRELMDESTDNGAEDLRVKLENLKYSPPPPPNSNTSSTTPNTLLENLKADGTLSSNLAASIAPADMLNVWNATKMNNKNSVNTADGKKLKCLYCDRLYGYETNLRAHIRQRHQGIRVPCPFCERTFTRNNTVRRHIAREHKQEIGLAAGATIAPAHLAAAAAASAAATAAASNHSP.

The BTB domain occupies 32 to 98 (ADVILSCDGV…MYKGEVHVSQ (67 aa)). Disordered regions lie at residues 122-155 (RLAAQQAQQHMGDLSPLDSPTGRRSVRNSLSGGS), 291-310 (CDSLMHPGGSSSSSGMGYTH), 330-437 (RSPY…DEST), and 450-470 (NLKYSPPPPPNSNTSSTTPNT). Low complexity predominate over residues 364–374 (PSSSASSTAPT). Residues 384 to 409 (ASPQSSRYENHSPSTTAGNGNATSSL) show a composition bias toward polar residues. A compositionally biased stretch (acidic residues) spans 425–437 (ANDDDRELMDEST). The segment covering 461 to 470 (SNTSSTTPNT) has biased composition (low complexity). C2H2-type zinc fingers lie at residues 517–540 (LKCLYCDRLYGYETNLRAHIRQRH) and 545–568 (VPCPFCERTFTRNNTVRRHIAREH).

Broadly expressed in the developing larval central nervous system (at protein level). Expressed in the larval lymph gland and circulating hemocytes (at protein level). Expressed in all cell types of the adult testis stem cell niche but not detected in somatic cells of the adult ovary (at protein level). In the testis, expressed at high levels in cyst stem cells and early cyst cells and, at lower levels, in germline stem cells (at protein level).

The protein resides in the nucleus. Required for morphological differentiation of postmitotic neurons during postembryonic brain development. Ensures production of appropriate neuron subtypes within a lineage by preventing precocious generation of late neuronal types of that lineage. Acts as a downstream mediator of the transcriptional activator Stat92e and is required for the development of the eye-antennal disk which gives rise to the adult eye, antenna and head capsule, for transcriptional repression of the Notch receptor ligand Ser and for the self-renewal of cyst stem cells in the testis. In the adult testis, maintains the male identify of adult somatic cyst stem cells. Represses expression and alternative splicing of transformer pre-mRNA, resulting in the production of the male-specific isoform of transcription factor dsx which ensures male-specific transcription of target genes. Plays a role in actin nuclear localization through its involvement in repressing the expression of the kinase Cdi. This maintains the cofilin/actin-depolymerizing factor homolog tsr in its unphosphorylated state which is required for actin nuclear import. This chain is Zinc finger protein chinmo, found in Drosophila melanogaster (Fruit fly).